The primary structure comprises 359 residues: Protein RecA (359 aa).

77–84 (GPESSGKT) serves as a coordination point for ATP.

This sequence belongs to the RecA family.

It localises to the cytoplasm. Its function is as follows. Can catalyze the hydrolysis of ATP in the presence of single-stranded DNA, the ATP-dependent uptake of single-stranded DNA by duplex DNA, and the ATP-dependent hybridization of homologous single-stranded DNAs. It interacts with LexA causing its activation and leading to its autocatalytic cleavage. This chain is Protein RecA, found in Azospirillum lipoferum (strain 4B).